We begin with the raw amino-acid sequence, 330 residues long: MHHQSVLHSGYFHPLLRAWQTTPSTVSATNLIYPIFVTDVPDDVQPIASLPGVARYGVNQLEEMLRPLVEAGLRCVLIFGVPSRVPKDEQGSAADSEDSPTIEAVRLLRKTFPTLLVACDVCLCPYTSHGHCGLLSENGAFLAEESRQRLAEVALAYAKAGCQVVAPSDMMDGRVEAIKAALLKHGLGNRVSVMSYSAKFASCFYGPFRDAAQSSPAFGDRRCYQLPPGARGLALRAVARDIQEGADILMVKPGLPYLDMVQEVKDKHPELPLAVYQVSGEFAMLWHGAKAGAFDLRTAVLESMTAFRRAGADIIITYFAPQLLKWLKEE.

4 residues coordinate Zn(2+): cysteine 122, cysteine 124, histidine 131, and cysteine 132. Lysine 199 functions as the Schiff-base intermediate with substrate in the catalytic mechanism. Lysine 199 bears the N6-succinyllysine mark. Arginine 209 lines the 5-aminolevulinate pocket. At serine 215 the chain carries Phosphoserine. 5-aminolevulinate is bound at residue arginine 221. A Zn(2+)-binding site is contributed by cysteine 223. Lysine 252 acts as the Schiff-base intermediate with substrate in catalysis. Lysine 252 bears the N6-succinyllysine mark. Residues serine 279 and tyrosine 318 each contribute to the 5-aminolevulinate site.

The protein belongs to the ALAD family. In terms of assembly, homooctamer; active form. Homohexamer; low activity form. It depends on Zn(2+) as a cofactor.

The protein resides in the cytoplasm. The protein localises to the cytosol. The enzyme catalyses 2 5-aminolevulinate = porphobilinogen + 2 H2O + H(+). The protein operates within porphyrin-containing compound metabolism; protoporphyrin-IX biosynthesis; coproporphyrinogen-III from 5-aminolevulinate: step 1/4. Its activity is regulated as follows. Can alternate between a fully active homooctamer and a low-activity homohexamer. A bound magnesium ion may promote the assembly of the fully active homooctamer. The magnesium-binding site is absent in the low-activity homohexamer. Inhibited by compounds that favor the hexameric state. Inhibited by divalent lead ions. The lead ions partially displace the zinc cofactor. Functionally, catalyzes an early step in the biosynthesis of tetrapyrroles. Binds two molecules of 5-aminolevulinate per subunit, each at a distinct site, and catalyzes their condensation to form porphobilinogen. This chain is Delta-aminolevulinic acid dehydratase (Alad), found in Rattus norvegicus (Rat).